The sequence spans 289 residues: Cytochrome bc1 complex cytochrome c subunit (289 aa).

Positions 1 to 11 (MKKLGFTRSSR) are enriched in basic residues. The interval 1-28 (MKKLGFTRSSRRCSQPQEREQESERSRR) is disordered. A helical transmembrane segment spans residues 37 to 55 (GLLLLVALTVSGGLAAVLT). Cytochrome c domains follow at residues 69–149 (ALLR…QANG) and 170–248 (TDLG…RTVI). 6 residues coordinate heme c: cysteine 82, cysteine 85, histidine 86, cysteine 183, cysteine 186, and histidine 187. Residues 267–287 (GMAIWIIGMVTAIGLALWIGA) traverse the membrane as a helical segment.

The cytochrome bc1 complex is composed of a cytochrome b (QcrB), the Rieske iron-sulfur protein (QcrA) and a diheme cytochrome c (QcrC) subunit. In terms of processing, binds 2 heme c groups covalently per subunit.

The protein localises to the cell membrane. The enzyme catalyses a quinol + 2 Fe(III)-[cytochrome c](out) = a quinone + 2 Fe(II)-[cytochrome c](out) + 2 H(+)(out). Its function is as follows. Cytochrome b subunit of the cytochrome bc1 complex, an essential component of the respiratory electron transport chain required for ATP synthesis. The bc1 complex catalyzes the oxidation of ubiquinol and the reduction of cytochrome c in the respiratory chain. The bc1 complex operates through a Q-cycle mechanism that couples electron transfer to generation of the proton gradient that drives ATP synthesis. The polypeptide is Cytochrome bc1 complex cytochrome c subunit (qcrC) (Mycobacterium leprae (strain TN)).